We begin with the raw amino-acid sequence, 87 residues long: uncharacterized protein (87 aa).

The protein to B.subtilis XkdR.

This is an uncharacterized protein from Bacillus subtilis (strain 168).